The chain runs to 68 residues: Large ribosomal subunit protein bL33c (68 aa).

It belongs to the bacterial ribosomal protein bL33 family.

It localises to the plastid. Its subcellular location is the chloroplast. This Lactuca sativa (Garden lettuce) protein is Large ribosomal subunit protein bL33c.